The sequence spans 277 residues: Phosphatidylglycerol--prolipoprotein diacylglyceryl transferase (277 aa).

Transmembrane regions (helical) follow at residues 16–36 (FFQI…FYFL), 62–82 (LLFF…VLFY), and 101–121 (GMAF…FAHL). Position 145 (R145) interacts with a 1,2-diacyl-sn-glycero-3-phospho-(1'-sn-glycerol). 2 consecutive transmembrane segments (helical) span residues 214–234 (PIWG…RFIA) and 243–263 (FLGL…PMIV).

The protein belongs to the Lgt family.

It localises to the cell inner membrane. The catalysed reaction is L-cysteinyl-[prolipoprotein] + a 1,2-diacyl-sn-glycero-3-phospho-(1'-sn-glycerol) = an S-1,2-diacyl-sn-glyceryl-L-cysteinyl-[prolipoprotein] + sn-glycerol 1-phosphate + H(+). Its pathway is protein modification; lipoprotein biosynthesis (diacylglyceryl transfer). In terms of biological role, catalyzes the transfer of the diacylglyceryl group from phosphatidylglycerol to the sulfhydryl group of the N-terminal cysteine of a prolipoprotein, the first step in the formation of mature lipoproteins. The sequence is that of Phosphatidylglycerol--prolipoprotein diacylglyceryl transferase from Leptothrix cholodnii (strain ATCC 51168 / LMG 8142 / SP-6) (Leptothrix discophora (strain SP-6)).